We begin with the raw amino-acid sequence, 155 residues long: Small ribosomal subunit protein uS7 (155 aa).

The protein belongs to the universal ribosomal protein uS7 family. In terms of assembly, part of the 30S ribosomal subunit. Contacts proteins S9 and S11.

Its function is as follows. One of the primary rRNA binding proteins, it binds directly to 16S rRNA where it nucleates assembly of the head domain of the 30S subunit. Is located at the subunit interface close to the decoding center, probably blocks exit of the E-site tRNA. The protein is Small ribosomal subunit protein uS7 of Mycoplasma genitalium (strain ATCC 33530 / DSM 19775 / NCTC 10195 / G37) (Mycoplasmoides genitalium).